Reading from the N-terminus, the 277-residue chain is MEMO1 family protein CTN_0605 (277 aa).

It belongs to the MEMO1 family.

The protein is MEMO1 family protein CTN_0605 of Thermotoga neapolitana (strain ATCC 49049 / DSM 4359 / NBRC 107923 / NS-E).